Consider the following 291-residue polypeptide: 4-diphosphocytidyl-2-C-methyl-D-erythritol kinase (291 aa).

Residue Lys11 is part of the active site. 97 to 107 (PVAAGIGGGSS) serves as a coordination point for ATP. Residue Asp139 is part of the active site.

Belongs to the GHMP kinase family. IspE subfamily.

The catalysed reaction is 4-CDP-2-C-methyl-D-erythritol + ATP = 4-CDP-2-C-methyl-D-erythritol 2-phosphate + ADP + H(+). The protein operates within isoprenoid biosynthesis; isopentenyl diphosphate biosynthesis via DXP pathway; isopentenyl diphosphate from 1-deoxy-D-xylulose 5-phosphate: step 3/6. Catalyzes the phosphorylation of the position 2 hydroxy group of 4-diphosphocytidyl-2C-methyl-D-erythritol. The polypeptide is 4-diphosphocytidyl-2-C-methyl-D-erythritol kinase (Methylorubrum extorquens (strain PA1) (Methylobacterium extorquens)).